The following is a 261-amino-acid chain: Cytochrome c oxidase subunit 3 (261 aa).

Over M1–P15 the chain is Mitochondrial matrix. Residues W16–W34 traverse the membrane as a helical segment. At F35–P40 the chain is on the mitochondrial intermembrane side. Residues T41–T66 traverse the membrane as a helical segment. Topologically, residues Y67–T72 are mitochondrial matrix. Residues K73–S105 traverse the membrane as a helical segment. Topologically, residues L106–E128 are mitochondrial intermembrane. A helical membrane pass occupies residues V129–M152. At E153 to N155 the chain is on the mitochondrial matrix side. Residues R156 to E183 form a helical membrane-spanning segment. Residues S184–D190 are Mitochondrial intermembrane-facing. Residues G191 to L223 form a helical membrane-spanning segment. Residues L224 to H232 are Mitochondrial matrix-facing. The chain crosses the membrane as a helical span at residues F233–I256. Topologically, residues Y257–S261 are mitochondrial intermembrane.

This sequence belongs to the cytochrome c oxidase subunit 3 family. In terms of assembly, component of the cytochrome c oxidase (complex IV, CIV), a multisubunit enzyme composed of 14 subunits. The complex is composed of a catalytic core of 3 subunits MT-CO1, MT-CO2 and MT-CO3, encoded in the mitochondrial DNA, and 11 supernumerary subunits COX4I, COX5A, COX5B, COX6A, COX6B, COX6C, COX7A, COX7B, COX7C, COX8 and NDUFA4, which are encoded in the nuclear genome. The complex exists as a monomer or a dimer and forms supercomplexes (SCs) in the inner mitochondrial membrane with NADH-ubiquinone oxidoreductase (complex I, CI) and ubiquinol-cytochrome c oxidoreductase (cytochrome b-c1 complex, complex III, CIII), resulting in different assemblies (supercomplex SCI(1)III(2)IV(1) and megacomplex MCI(2)III(2)IV(2)).

It localises to the mitochondrion inner membrane. It catalyses the reaction 4 Fe(II)-[cytochrome c] + O2 + 8 H(+)(in) = 4 Fe(III)-[cytochrome c] + 2 H2O + 4 H(+)(out). In terms of biological role, component of the cytochrome c oxidase, the last enzyme in the mitochondrial electron transport chain which drives oxidative phosphorylation. The respiratory chain contains 3 multisubunit complexes succinate dehydrogenase (complex II, CII), ubiquinol-cytochrome c oxidoreductase (cytochrome b-c1 complex, complex III, CIII) and cytochrome c oxidase (complex IV, CIV), that cooperate to transfer electrons derived from NADH and succinate to molecular oxygen, creating an electrochemical gradient over the inner membrane that drives transmembrane transport and the ATP synthase. Cytochrome c oxidase is the component of the respiratory chain that catalyzes the reduction of oxygen to water. Electrons originating from reduced cytochrome c in the intermembrane space (IMS) are transferred via the dinuclear copper A center (CU(A)) of subunit 2 and heme A of subunit 1 to the active site in subunit 1, a binuclear center (BNC) formed by heme A3 and copper B (CU(B)). The BNC reduces molecular oxygen to 2 water molecules using 4 electrons from cytochrome c in the IMS and 4 protons from the mitochondrial matrix. This is Cytochrome c oxidase subunit 3 (MT-CO3) from Tachyglossus aculeatus aculeatus (Southeast Australian short-beaked echidna).